Reading from the N-terminus, the 101-residue chain is NAD(P)H-quinone oxidoreductase subunit 4L, chloroplastic (101 aa).

3 consecutive transmembrane segments (helical) span residues 2-22 (MLEH…YGLI), 32-52 (MCLE…SDFF), and 61-81 (IFSI…LAIV).

This sequence belongs to the complex I subunit 4L family. As to quaternary structure, NDH is composed of at least 16 different subunits, 5 of which are encoded in the nucleus.

It is found in the plastid. Its subcellular location is the chloroplast thylakoid membrane. It catalyses the reaction a plastoquinone + NADH + (n+1) H(+)(in) = a plastoquinol + NAD(+) + n H(+)(out). The catalysed reaction is a plastoquinone + NADPH + (n+1) H(+)(in) = a plastoquinol + NADP(+) + n H(+)(out). In terms of biological role, NDH shuttles electrons from NAD(P)H:plastoquinone, via FMN and iron-sulfur (Fe-S) centers, to quinones in the photosynthetic chain and possibly in a chloroplast respiratory chain. The immediate electron acceptor for the enzyme in this species is believed to be plastoquinone. Couples the redox reaction to proton translocation, and thus conserves the redox energy in a proton gradient. This Guizotia abyssinica (Niger) protein is NAD(P)H-quinone oxidoreductase subunit 4L, chloroplastic.